A 210-amino-acid chain; its full sequence is WASH complex subunit 3 (210 aa).

A coiled-coil region spans residues 49-73; that stretch reads EEKLASISLRIQQIETTLSILEAKL. Residues 173–210 form a disordered region; it reads LDPNLLDTPDAPVPDAVKKNTLDQDDDSDDGSESSFSD. Acidic residues predominate over residues 195–204; it reads DQDDDSDDGS.

It belongs to the CCDC53 family. Component of the WASH complex.

The protein is WASH complex subunit 3 of Salmo salar (Atlantic salmon).